A 242-amino-acid chain; its full sequence is Caffeoyl-CoA O-methyltransferase 2 (242 aa).

Lys-16 serves as a coordination point for substrate. S-adenosyl-L-methionine-binding positions include Thr-58, Glu-80, 82 to 83, Ser-88, Asp-106, and Ala-135; that span reads GV. Asp-158 lines the substrate pocket. Position 158 (Asp-158) interacts with a divalent metal cation. Asp-160 is a binding site for S-adenosyl-L-methionine. A divalent metal cation is bound by residues Asp-184 and Asn-185. Asn-189 contributes to the substrate binding site.

This sequence belongs to the class I-like SAM-binding methyltransferase superfamily. Cation-dependent O-methyltransferase family. CCoAMT subfamily. It depends on Mg(2+) as a cofactor. In terms of tissue distribution, mostly expressed in the bottom and middle parts of the stems.

The catalysed reaction is (E)-caffeoyl-CoA + S-adenosyl-L-methionine = (E)-feruloyl-CoA + S-adenosyl-L-homocysteine + H(+). It participates in aromatic compound metabolism; phenylpropanoid biosynthesis. Functionally, methylates caffeoyl-CoA to feruloyl-CoA and 5-hydroxyferuloyl-CoA to sinapoyl-CoA. Plays a role in the synthesis of feruloylated polysaccharides. Involved in the reinforcement of the plant cell wall. Also involved in the responding to wounding or pathogen challenge by the increased formation of cell wall-bound ferulic acid polymers. Methylates 5-hydroxyferulolyl-CoA more efficiently than caffeoyl-CoA. The protein is Caffeoyl-CoA O-methyltransferase 2 (CCOAOMT2) of Nicotiana tabacum (Common tobacco).